A 156-amino-acid chain; its full sequence is Ribonuclease H (156 aa).

The RNase H type-1 domain occupies 2–144 (TMKNVQAFTD…CDVLARTQAS (143 aa)). Positions 11, 49, 71, and 136 each coordinate Mg(2+).

It belongs to the RNase H family. In terms of assembly, monomer. Mg(2+) is required as a cofactor.

The protein resides in the cytoplasm. The catalysed reaction is Endonucleolytic cleavage to 5'-phosphomonoester.. Its function is as follows. Endonuclease that specifically degrades the RNA of RNA-DNA hybrids. The polypeptide is Ribonuclease H (Nitratidesulfovibrio vulgaris (strain DSM 19637 / Miyazaki F) (Desulfovibrio vulgaris)).